The primary structure comprises 310 residues: Bifunctional phosphoglucose/phosphomannose isomerase (310 aa).

The SIS domain occupies 22–152 (FDGSFRTGTF…IRPKHEDIEE (131 aa)). Residues Gly-41, Ser-42, Ser-80, Ser-82, Thr-85, and Arg-128 each coordinate D-fructose 6-phosphate. Glu-202 (proton acceptor) is an active-site residue. D-fructose 6-phosphate is bound by residues His-218 and Lys-306. His-218 functions as the Proton donor in the catalytic mechanism. The active-site Proton acceptor is Lys-306.

The protein belongs to the PGI/PMI family. As to quaternary structure, homodimer.

It carries out the reaction alpha-D-glucose 6-phosphate = beta-D-fructose 6-phosphate. The catalysed reaction is D-mannose 6-phosphate = D-fructose 6-phosphate. With respect to regulation, inhibited by low concentrations of erythrose 4-phosphate and 6-phosphogluconate. In terms of biological role, dual specificity isomerase that catalyzes the isomerization of both glucose-6-phosphate and mannose-6-phosphate to fructose-6-phosphate with similar catalytic efficiency. This chain is Bifunctional phosphoglucose/phosphomannose isomerase, found in Thermoplasma acidophilum (strain ATCC 25905 / DSM 1728 / JCM 9062 / NBRC 15155 / AMRC-C165).